The chain runs to 292 residues: Elongation factor Ts (292 aa).

The segment at 80–83 (TDFV) is involved in Mg(2+) ion dislocation from EF-Tu.

It belongs to the EF-Ts family.

The protein localises to the cytoplasm. In terms of biological role, associates with the EF-Tu.GDP complex and induces the exchange of GDP to GTP. It remains bound to the aminoacyl-tRNA.EF-Tu.GTP complex up to the GTP hydrolysis stage on the ribosome. The sequence is that of Elongation factor Ts from Ralstonia nicotianae (strain ATCC BAA-1114 / GMI1000) (Ralstonia solanacearum).